Reading from the N-terminus, the 465-residue chain is 23S rRNA (uracil(1939)-C(5))-methyltransferase RlmD (465 aa).

A disordered region spans residues 1–24; that stretch reads MSEAVPLSTRRASSAGDAPGRAPV. A TRAM domain is found at 16–80; sequence GDAPGRAPVL…PTYEQAQVVD (65 aa). 4 residues coordinate [4Fe-4S] cluster: cysteine 93, cysteine 99, cysteine 102, and cysteine 181. Positions 289, 318, 323, 339, 367, and 388 each coordinate S-adenosyl-L-methionine. The active-site Nucleophile is cysteine 421.

Belongs to the class I-like SAM-binding methyltransferase superfamily. RNA M5U methyltransferase family. RlmD subfamily.

It catalyses the reaction uridine(1939) in 23S rRNA + S-adenosyl-L-methionine = 5-methyluridine(1939) in 23S rRNA + S-adenosyl-L-homocysteine + H(+). Its function is as follows. Catalyzes the formation of 5-methyl-uridine at position 1939 (m5U1939) in 23S rRNA. In Burkholderia mallei (strain ATCC 23344), this protein is 23S rRNA (uracil(1939)-C(5))-methyltransferase RlmD.